The chain runs to 214 residues: Ribosomal RNA small subunit methyltransferase G (214 aa).

Residues Gly78, Leu83, 129–130 (AE), and Arg144 each bind S-adenosyl-L-methionine.

This sequence belongs to the methyltransferase superfamily. RNA methyltransferase RsmG family.

It is found in the cytoplasm. The enzyme catalyses guanosine(527) in 16S rRNA + S-adenosyl-L-methionine = N(7)-methylguanosine(527) in 16S rRNA + S-adenosyl-L-homocysteine. Functionally, specifically methylates the N7 position of guanine in position 527 of 16S rRNA. This chain is Ribosomal RNA small subunit methyltransferase G, found in Marinobacter nauticus (strain ATCC 700491 / DSM 11845 / VT8) (Marinobacter aquaeolei).